A 733-amino-acid chain; its full sequence is Catalase-peroxidase (733 aa).

Residues 1–23 form the signal peptide; the sequence is MNNESKCPFAAAHGVRSPATARA. The segment at residues 96 to 224 is a cross-link (tryptophyl-tyrosyl-methioninium (Trp-Tyr) (with M-250)); sequence WHSAGTYRTA…LAAVQMGLIY (129 aa). Catalysis depends on H97, which acts as the Proton acceptor. Positions 224–250 form a cross-link, tryptophyl-tyrosyl-methioninium (Tyr-Met) (with W-96); that stretch reads YVNPEGPDGNPDPVASGRDVRETFARM. H265 contacts heme b.

It belongs to the peroxidase family. Peroxidase/catalase subfamily. As to quaternary structure, homodimer or homotetramer. Requires heme b as cofactor. In terms of processing, formation of the three residue Trp-Tyr-Met cross-link is important for the catalase, but not the peroxidase activity of the enzyme.

It carries out the reaction H2O2 + AH2 = A + 2 H2O. The enzyme catalyses 2 H2O2 = O2 + 2 H2O. Bifunctional enzyme with both catalase and broad-spectrum peroxidase activity. The sequence is that of Catalase-peroxidase from Azoarcus sp. (strain BH72).